Reading from the N-terminus, the 53-residue chain is Rubredoxin (53 aa).

In terms of domain architecture, Rubredoxin-like spans 1 to 53; the sequence is MTKYVCTVCGYVYDPEVGDPDNNINPGTSFQDIPEDWVCPLCGVGKDQFEEEA. 4 residues coordinate Fe cation: Cys6, Cys9, Cys39, and Cys42.

It belongs to the rubredoxin family. Fe(3+) serves as cofactor.

Rubredoxin is a small nonheme, iron protein lacking acid-labile sulfide. Its single Fe, chelated to 4 Cys, functions as an electron acceptor and may also stabilize the conformation of the molecule. This chain is Rubredoxin, found in Acetoanaerobium sticklandii (strain ATCC 12662 / DSM 519 / JCM 1433 / CCUG 9281 / NCIMB 10654 / HF) (Clostridium sticklandii).